The primary structure comprises 894 residues: Alanine--tRNA ligase (894 aa).

Zn(2+) contacts are provided by His569, His573, Cys683, and His687.

The protein belongs to the class-II aminoacyl-tRNA synthetase family. Zn(2+) serves as cofactor.

It is found in the cytoplasm. It carries out the reaction tRNA(Ala) + L-alanine + ATP = L-alanyl-tRNA(Ala) + AMP + diphosphate. Its function is as follows. Catalyzes the attachment of alanine to tRNA(Ala) in a two-step reaction: alanine is first activated by ATP to form Ala-AMP and then transferred to the acceptor end of tRNA(Ala). Also edits incorrectly charged Ser-tRNA(Ala) and Gly-tRNA(Ala) via its editing domain. The chain is Alanine--tRNA ligase from Chloroflexus aurantiacus (strain ATCC 29366 / DSM 635 / J-10-fl).